The sequence spans 371 residues: dTDP-4-amino-4,6-dideoxy-D-glucose transaminase (371 aa).

Residue Lys186 is modified to N6-(pyridoxal phosphate)lysine.

The protein belongs to the DegT/DnrJ/EryC1 family. Pyridoxal 5'-phosphate serves as cofactor.

It catalyses the reaction dTDP-4-amino-4,6-dideoxy-D-glucose + 2-oxoglutarate = dTDP-4-dehydro-6-deoxy-alpha-D-glucose + L-glutamate. It functions in the pathway bacterial outer membrane biogenesis; lipopolysaccharide biosynthesis. Catalyzes the conversion of dTDP-4-dehydro-6-deoxy-D-glucose (dTDP-D-Glc4O) to dTDP-4-amino-4,6-dideoxy-D-glucose (dTDP-D-Qui4N). This is dTDP-4-amino-4,6-dideoxy-D-glucose transaminase (vioA) from Escherichia coli.